Here is a 232-residue protein sequence, read N- to C-terminus: Large ribosomal subunit protein uL1 (232 aa).

This sequence belongs to the universal ribosomal protein uL1 family. Part of the 50S ribosomal subunit.

Binds directly to 23S rRNA. The L1 stalk is quite mobile in the ribosome, and is involved in E site tRNA release. In terms of biological role, protein L1 is also a translational repressor protein, it controls the translation of the L11 operon by binding to its mRNA. This is Large ribosomal subunit protein uL1 from Chlamydia trachomatis serovar L2b (strain UCH-1/proctitis).